The following is a 726-amino-acid chain: Catalase-peroxidase (726 aa).

The interval 1–33 (MSTTDDTHNTLSTGKCPFHQGGHDRSAGAGTAS) is disordered. A cross-link (tryptophyl-tyrosyl-methioninium (Trp-Tyr) (with M-252)) is located at residues 105–226 (WHGAGTYRSI…LGATEMGLIY (122 aa)). H106 acts as the Proton acceptor in catalysis. Positions 226 to 252 (YVNPEGPDHSGEPLSAAAAIRATFGNM) form a cross-link, tryptophyl-tyrosyl-methioninium (Tyr-Met) (with W-105). Position 267 (H267) interacts with heme b.

This sequence belongs to the peroxidase family. Peroxidase/catalase subfamily. As to quaternary structure, homodimer or homotetramer. Heme b serves as cofactor. Post-translationally, formation of the three residue Trp-Tyr-Met cross-link is important for the catalase, but not the peroxidase activity of the enzyme.

It catalyses the reaction H2O2 + AH2 = A + 2 H2O. It carries out the reaction 2 H2O2 = O2 + 2 H2O. Its function is as follows. Bifunctional enzyme with both catalase and broad-spectrum peroxidase activity. This is Catalase-peroxidase from Salmonella typhi.